The primary structure comprises 264 residues: 14-3-3 protein homolog (264 aa).

Residues 236–258 (SEAPAATEEQQQSSQAPAAQPTE) show a composition bias toward low complexity. A disordered region spans residues 236-264 (SEAPAATEEQQQSSQAPAAQPTEGKADQE).

Belongs to the 14-3-3 family.

The polypeptide is 14-3-3 protein homolog (BMH1) (Candida albicans (strain SC5314 / ATCC MYA-2876) (Yeast)).